The primary structure comprises 385 residues: UPF0284 protein A9601_04941 (385 aa).

It belongs to the UPF0284 family.

The sequence is that of UPF0284 protein A9601_04941 from Prochlorococcus marinus (strain AS9601).